A 560-amino-acid polypeptide reads, in one-letter code: Beta-glucosidase 26, peroxisomal (560 aa).

A beta-D-glucoside-binding positions include Q33, H137, 182–183 (NE), Y326, E398, W450, 457–458 (EW), and Y466. E183 serves as the catalytic Proton donor. The Nucleophile role is filled by E398.

Belongs to the glycosyl hydrolase 1 family.

It is found in the peroxisome. It carries out the reaction Hydrolysis of terminal, non-reducing beta-D-glucosyl residues with release of beta-D-glucose.. Its function is as follows. Possesses beta-glucosidase activity toward 4-methyl-umbelliferyl-beta-D-glucoside in vitro. Possesses myrosinase activity toward indol-3-yl-methylglucosinolate (I3M) and 4-methoxy-indol-3-yl-methylglucosinolate (4MO-I3M) in vivo. Component of an inducible preinvasion resistance mechanism that prevents penetration of the nonhost fungal species B.graminis and E.pisi. Involved in indole glucosinolate (IGS) activation during pattern-triggered immunity (PTI). Functions as a myrosinase for the breakdown of flg22-triggered IGS. Required for both callose deposition and glucosinolate activation during pathogen-triggered resistance. During fungal attack, required for IGS activation that mediates broad-spectrum antifungal defense. This is Beta-glucosidase 26, peroxisomal from Arabidopsis thaliana (Mouse-ear cress).